Consider the following 382-residue polypeptide: Ribosomal RNA large subunit methyltransferase G (382 aa).

It belongs to the methyltransferase superfamily. RlmG family.

Its subcellular location is the cytoplasm. It catalyses the reaction guanosine(1835) in 23S rRNA + S-adenosyl-L-methionine = N(2)-methylguanosine(1835) in 23S rRNA + S-adenosyl-L-homocysteine + H(+). Its function is as follows. Specifically methylates the guanine in position 1835 (m2G1835) of 23S rRNA. This is Ribosomal RNA large subunit methyltransferase G from Aliivibrio fischeri (strain MJ11) (Vibrio fischeri).